Reading from the N-terminus, the 186-residue chain is MDACVSMSENYFDEALPRLLALLNDPDPTIYRTAVKGLGVFGHGVLFPLLDLYDKTDNGTVKACCIKAFVQVAVNFPDAVFPEQAIQALKLALDDINPVVSQSALMTLGYFSKQEHEKERVIPILIQVCNSTNIAHVQSAVMSLAEIDSTEVDQCFERMINHDSTDVLIKEILEASMSRRQSLFGN.

Functionally, involved in the biosynthesis of bilin. The polypeptide is Bilin biosynthesis protein CpeZ (cpeZ) (Synechococcus sp. (strain WH8020)).